Reading from the N-terminus, the 677-residue chain is DNA ligase (677 aa).

NAD(+)-binding positions include 35 to 39 (DAEFD), 85 to 86 (SL), and Glu-110. Lys-112 functions as the N6-AMP-lysine intermediate in the catalytic mechanism. NAD(+) is bound by residues Arg-133 and Glu-173. The interval 189 to 210 (QKEGGKPFANPRNAAAGSLRQK) is disordered. NAD(+) contacts are provided by Lys-289 and Lys-313. 4 residues coordinate Zn(2+): Cys-407, Cys-410, Cys-426, and Cys-432. One can recognise a BRCT domain in the interval 596-677 (IPDQVLEGLT…FKQLLANGTV (82 aa)).

It belongs to the NAD-dependent DNA ligase family. LigA subfamily. It depends on Mg(2+) as a cofactor. Mn(2+) is required as a cofactor.

The catalysed reaction is NAD(+) + (deoxyribonucleotide)n-3'-hydroxyl + 5'-phospho-(deoxyribonucleotide)m = (deoxyribonucleotide)n+m + AMP + beta-nicotinamide D-nucleotide.. Its function is as follows. DNA ligase that catalyzes the formation of phosphodiester linkages between 5'-phosphoryl and 3'-hydroxyl groups in double-stranded DNA using NAD as a coenzyme and as the energy source for the reaction. It is essential for DNA replication and repair of damaged DNA. This is DNA ligase from Corynebacterium diphtheriae (strain ATCC 700971 / NCTC 13129 / Biotype gravis).